A 619-amino-acid chain; its full sequence is ATP-dependent zinc metalloprotease FtsH 1 (619 aa).

Residues 1–8 (MADEKRPA) are Cytoplasmic-facing. The helical transmembrane segment at 9–29 (SRAWLGYLLIAVGILVLSGIV) threads the bilayer. Residues 30–108 (RSRGRPLVPY…RIEAKSPQTS (79 aa)) lie on the Periplasmic side of the membrane. The chain crosses the membrane as a helical span at residues 109–129 (VWMQVAIWMLPLVLINAAFFM). Residues 130 to 619 (MLRRAGQGAG…KIAVGPPSAA (490 aa)) are Cytoplasmic-facing. 203 to 210 (GPPGTGKT) serves as a coordination point for ATP. H426 contributes to the Zn(2+) binding site. E427 is an active-site residue. Zn(2+) is bound by residues H430 and D503.

It in the central section; belongs to the AAA ATPase family. The protein in the C-terminal section; belongs to the peptidase M41 family. As to quaternary structure, homohexamer. Zn(2+) serves as cofactor.

The protein resides in the cell inner membrane. Functionally, acts as a processive, ATP-dependent zinc metallopeptidase for both cytoplasmic and membrane proteins. Plays a role in the quality control of integral membrane proteins. In Sorangium cellulosum (strain So ce56) (Polyangium cellulosum (strain So ce56)), this protein is ATP-dependent zinc metalloprotease FtsH 1.